Here is a 365-residue protein sequence, read N- to C-terminus: MLVPQDMVTVQSKTIFQINKYYAEKVQVRMGNIALVLREICKIVQEVLREVEVQEPRFISSLVECNGRYEGLEVISPTAFEVVLYLNQMGVFNFVDDGSLPGAAVLKLSDGRKRSMSLWVEFITASGYLSARKIRSRFHTLVAQAVEKCPYRDMVKLVPDTTEVKLRIRERYTVQITPAFKCTGIWPRSAAHWPILNIPWPHPALVAEVKTEGFDLLSKESVILQGKNANVEGDAWLLHFTEAENRLLQGGYRKRCLSILKTLCDRHLELPGVPIGYYHLKTLLLYECEKHPRETEWDAGCVADRLNGIFLQLISCLQCRRCPHYFLPSLDLFKGKSPTVLDNASKHVWRLCRDILTSSKAFDRL.

Belongs to the mab-21 family.

This Anopheles gambiae (African malaria mosquito) protein is Protein mab-21-like.